The following is a 101-amino-acid chain: Small ribosomal subunit protein uS10 (101 aa).

Belongs to the universal ribosomal protein uS10 family. Part of the 30S ribosomal subunit.

Its function is as follows. Involved in the binding of tRNA to the ribosomes. This chain is Small ribosomal subunit protein uS10, found in Ureaplasma parvum serovar 3 (strain ATCC 27815 / 27 / NCTC 11736).